Consider the following 543-residue polypeptide: EH domain-containing protein 2 (543 aa).

Ser3 and Ser44 each carry phosphoserine. Residues 55 to 286 form the Dynamin-type G domain; the sequence is FDGKPMVLVA…DLFRDIQGLP (232 aa). Positions 65-72 are G1 motif; sequence GQYSTGKT. 65–72 is an ATP binding site; it reads GQYSTGKT. Positions 91–92 are G2 motif; it reads EP. The G3 motif stretch occupies residues 153–156; that stretch reads DTPG. A G4 motif region spans residues 219–222; that stretch reads NKAD. Lys220 is an ATP binding site. A region of interest (G5 motif) is located at residue Val243. Trp258 provides a ligand contact to ATP. Residues 320-340 form a mediates membrane-binding region; it reads SVFGKENKKKQLIFKLPVIFA. A phosphoserine mark is found at Ser438, Ser468, Ser470, Ser484, and Ser493. Residues 449–537 enclose the EH domain; the sequence is DKSKYDEIFY…RRLVPPSKRR (89 aa). The EF-hand domain maps to 481-516; it reads LPNSVLGRIWKLSDVDRDGMLDDEEFALASHLIEAK. Ca(2+)-binding residues include Asp494, Asp496, Asp498, Met500, and Glu505. A disordered region spans residues 521–543; that stretch reads GLPTNLPRRLVPPSKRRQKGSAE. Over residues 534 to 543 the composition is skewed to basic residues; that stretch reads SKRRQKGSAE.

This sequence belongs to the TRAFAC class dynamin-like GTPase superfamily. Dynamin/Fzo/YdjA family. EHD subfamily. As to quaternary structure, homodimer and homooligomer. Interacts with EHD1. May also interact with EHD3 and EHD4. Interacts with MYOF. Interacts with EHBP1. Interacts with FER1L5 (via second C2 domain). Interacts with CAV1 in a cholesterol-dependent manner. Interacts (via EH domain) with PACSIN2 (via NPF motifs); this interaction probably stabilizes the caveolae.

The protein localises to the cell membrane. It is found in the membrane. It localises to the caveola. Its subcellular location is the endosome membrane. The protein resides in the cytoplasm. The protein localises to the cytosol. The very low intrinsic ATPase activity is increased upon interaction with liposomes. In terms of biological role, ATP- and membrane-binding protein that controls membrane reorganization/tubulation upon ATP hydrolysis. Plays a role in membrane trafficking between the plasma membrane and endosomes. Important for the internalization of GLUT4. Required for fusion of myoblasts to skeletal muscle myotubes. Required for normal translocation of FER1L5 to the plasma membrane. Regulates the equilibrium between cell surface-associated and cell surface-dissociated caveolae by constraining caveolae at the cell membrane. The polypeptide is EH domain-containing protein 2 (Rattus norvegicus (Rat)).